The primary structure comprises 678 residues: Dihydroxyacetone phosphate acyltransferase (678 aa).

Phosphoserine occurs at positions 12 and 17. The HXXXXD motif signature appears at 161–166 (HRSYID). Lysine 641 carries the post-translational modification N6-acetyllysine. Residues 676–678 (AKL) carry the Microbody targeting signal motif.

It belongs to the GPAT/DAPAT family. As to quaternary structure, part of a heterotrimeric complex composed of GNPAT, AGPS and a modified form of GNPAT. As to expression, highly expressed in liver and testis. Lower levels in heart, brain, lung and kidney. Detected in spleen.

Its subcellular location is the peroxisome membrane. The catalysed reaction is dihydroxyacetone phosphate + an acyl-CoA = a 1-acylglycerone 3-phosphate + CoA. It carries out the reaction dihydroxyacetone phosphate + hexadecanoyl-CoA = 1-hexadecanoylglycerone 3-phosphate + CoA. Its pathway is membrane lipid metabolism; glycerophospholipid metabolism. Dihydroxyacetonephosphate acyltransferase catalyzing the first step in the biosynthesis of plasmalogens, a subset of phospholipids that differ from other glycerolipids by having an alkyl chain attached through a vinyl ether linkage at the sn-1 position of the glycerol backbone, and which unique physical properties have an impact on various aspects of cell signaling and membrane biology. This is Dihydroxyacetone phosphate acyltransferase from Mus musculus (Mouse).